A 986-amino-acid chain; its full sequence is Bifunctional glutamine synthetase adenylyltransferase/adenylyl-removing enzyme (986 aa).

Residues 1 to 471 are adenylyl removase; that stretch reads MAEAIERSLS…RYAQLFEQEA (471 aa). The tract at residues 475–986 is adenylyl transferase; the sequence is TETGNLVFTG…RIFQGVVAAA (512 aa).

It belongs to the GlnE family. It depends on Mg(2+) as a cofactor.

It carries out the reaction [glutamine synthetase]-O(4)-(5'-adenylyl)-L-tyrosine + phosphate = [glutamine synthetase]-L-tyrosine + ADP. The enzyme catalyses [glutamine synthetase]-L-tyrosine + ATP = [glutamine synthetase]-O(4)-(5'-adenylyl)-L-tyrosine + diphosphate. Its function is as follows. Involved in the regulation of glutamine synthetase GlnA, a key enzyme in the process to assimilate ammonia. When cellular nitrogen levels are high, the C-terminal adenylyl transferase (AT) inactivates GlnA by covalent transfer of an adenylyl group from ATP to specific tyrosine residue of GlnA, thus reducing its activity. Conversely, when nitrogen levels are low, the N-terminal adenylyl removase (AR) activates GlnA by removing the adenylyl group by phosphorolysis, increasing its activity. The regulatory region of GlnE binds the signal transduction protein PII (GlnB) which indicates the nitrogen status of the cell. The polypeptide is Bifunctional glutamine synthetase adenylyltransferase/adenylyl-removing enzyme (Rhizobium meliloti (strain 1021) (Ensifer meliloti)).